A 254-amino-acid polypeptide reads, in one-letter code: Alcohol dehydrogenase (254 aa).

Residue Phe-10–Leu-33 participates in NAD(+) binding. Substrate is bound at residue Ser-138. Tyr-151 serves as the catalytic Proton acceptor.

This sequence belongs to the short-chain dehydrogenases/reductases (SDR) family. In terms of assembly, homodimer.

It catalyses the reaction a primary alcohol + NAD(+) = an aldehyde + NADH + H(+). The enzyme catalyses a secondary alcohol + NAD(+) = a ketone + NADH + H(+). The sequence is that of Alcohol dehydrogenase (Adh) from Drosophila persimilis (Fruit fly).